The primary structure comprises 290 residues: 4-hydroxybenzoate octaprenyltransferase (290 aa).

Transmembrane regions (helical) follow at residues 33 to 53 (LWAL…AVFV), 99 to 119 (LFVV…TMTI), 141 to 161 (LPQV…FAAV), 163 to 183 (ESVP…AVAY), 213 to 233 (FIIG…GWLN), 237 to 257 (WGYY…QKLI), and 268 to 288 (AFMN…MSYW).

This sequence belongs to the UbiA prenyltransferase family. Mg(2+) serves as cofactor.

It localises to the cell inner membrane. It catalyses the reaction all-trans-octaprenyl diphosphate + 4-hydroxybenzoate = 4-hydroxy-3-(all-trans-octaprenyl)benzoate + diphosphate. It functions in the pathway cofactor biosynthesis; ubiquinone biosynthesis. Its function is as follows. Catalyzes the prenylation of para-hydroxybenzoate (PHB) with an all-trans polyprenyl group. Mediates the second step in the final reaction sequence of ubiquinone-8 (UQ-8) biosynthesis, which is the condensation of the polyisoprenoid side chain with PHB, generating the first membrane-bound Q intermediate 3-octaprenyl-4-hydroxybenzoate. The protein is 4-hydroxybenzoate octaprenyltransferase of Escherichia fergusonii (strain ATCC 35469 / DSM 13698 / CCUG 18766 / IAM 14443 / JCM 21226 / LMG 7866 / NBRC 102419 / NCTC 12128 / CDC 0568-73).